The following is a 904-amino-acid chain: Phosphatidate phosphatase PAH1 (904 aa).

The segment at 1 to 112 (MSLVGRVGSL…SGSENNNGNQ (112 aa)) is N-LIP. Disordered regions lie at residues 254 to 293 (EESS…HDAE), 305 to 326 (ELTK…EDRN), 440 to 470 (GIIE…DRKT), 574 to 595 (VEEN…SSSG), and 612 to 655 (EHTG…QLVR). Basic and acidic residues-rich tracts occupy residues 265–293 (DKVD…HDAE), 311–326 (ENVK…EDRN), and 449–470 (SERV…DRKT). A compositionally biased stretch (polar residues) spans 631 to 642 (GLQNSPETQSTT). Positions 703-857 (IVISDVDGTI…FIINPKGEVA (155 aa)) are C-LIP. Residues 707-711 (DVDGT) carry the DXDXT motif motif.

Belongs to the lipin family. Mg(2+) is required as a cofactor. As to expression, expressed in roots, leaves, stems, flowers, siliques, embryos and mature seeds.

It localises to the cytoplasm. The protein localises to the cytosol. It catalyses the reaction a 1,2-diacyl-sn-glycero-3-phosphate + H2O = a 1,2-diacyl-sn-glycerol + phosphate. Functionally, magnesium-dependent phosphatidate phosphatase which catalyzes the dephosphorylation of phosphatidate to yield diacylglycerol. Acts redundantly with PAH2 to repress phospholipid biosynthesis at the endoplasmic reticulum (ER). May function indirectly as repressor of multiple enzymes involved in phospholipid biosynthesis. Is involved in the pathway of galactolipid synthesis in the ER, which is required for the membrane lipid remodeling, an essential adaptation mechanism to cope with phosphate starvation. The polypeptide is Phosphatidate phosphatase PAH1 (PAH1) (Arabidopsis thaliana (Mouse-ear cress)).